The following is a 432-amino-acid chain: 3-phosphoshikimate 1-carboxyvinyltransferase (432 aa).

3-phosphoshikimate-binding residues include lysine 22, serine 23, and arginine 27. Lysine 22 lines the phosphoenolpyruvate pocket. Glycine 96 and arginine 127 together coordinate phosphoenolpyruvate. 3-phosphoshikimate-binding residues include serine 173, serine 174, glutamine 175, serine 201, aspartate 316, asparagine 339, and lysine 343. A phosphoenolpyruvate-binding site is contributed by glutamine 175. The active-site Proton acceptor is the aspartate 316. Phosphoenolpyruvate is bound by residues arginine 347, arginine 391, and lysine 416.

Belongs to the EPSP synthase family. In terms of assembly, monomer.

Its subcellular location is the cytoplasm. It catalyses the reaction 3-phosphoshikimate + phosphoenolpyruvate = 5-O-(1-carboxyvinyl)-3-phosphoshikimate + phosphate. The protein operates within metabolic intermediate biosynthesis; chorismate biosynthesis; chorismate from D-erythrose 4-phosphate and phosphoenolpyruvate: step 6/7. Catalyzes the transfer of the enolpyruvyl moiety of phosphoenolpyruvate (PEP) to the 5-hydroxyl of shikimate-3-phosphate (S3P) to produce enolpyruvyl shikimate-3-phosphate and inorganic phosphate. This Actinobacillus pleuropneumoniae serotype 5b (strain L20) protein is 3-phosphoshikimate 1-carboxyvinyltransferase.